The chain runs to 175 residues: Gamma-crystallin A (175 aa).

Beta/gamma crystallin 'Greek key' domains follow at residues 2–40 (GKIT…RVDV) and 41–83 (HSWF…RLIP). The segment at 84 to 88 (QHTGT) is connecting peptide. Beta/gamma crystallin 'Greek key' domains are found at residues 89 to 129 (FRMR…RVLE) and 130 to 172 (GSWV…RRVM).

This sequence belongs to the beta/gamma-crystallin family.

Functionally, crystallins are the dominant structural components of the vertebrate eye lens. In Bos taurus (Bovine), this protein is Gamma-crystallin A (CRYGA).